The primary structure comprises 94 residues: Small ribosomal subunit protein uS19 (94 aa).

Belongs to the universal ribosomal protein uS19 family.

Its function is as follows. Protein S19 forms a complex with S13 that binds strongly to the 16S ribosomal RNA. The sequence is that of Small ribosomal subunit protein uS19 from Pelotomaculum thermopropionicum (strain DSM 13744 / JCM 10971 / SI).